The chain runs to 587 residues: Zinc finger protein 496 (587 aa).

The segment at 1–40 is disordered; it reads MPTALCPRVLAPKESEEPRKMRSPPGENPSPQGELPSPES. The segment covering 11–20 has biased composition (basic and acidic residues); it reads APKESEEPRK. Lys-13 is covalently cross-linked (Glycyl lysine isopeptide (Lys-Gly) (interchain with G-Cter in SUMO2)). Positions 42–124 constitute an SCAN box domain; the sequence is RRLFRRFRYQ…AAVEALEREP (83 aa). Position 185 is a phosphoserine (Ser-185). A KRAB domain is found at 221–291; sequence SPFKDMILCF…ELQDLQGKEV (71 aa). Residues 260–282 form a disordered region; sequence PPNDLAAQPDLSQGEENEPRVPE. At Ser-299 the chain carries Phosphoserine. The disordered stretch occupies residues 358 to 399; that stretch reads SSSGDEDSQHGPYCTEELGSPTEKQRSLPASHRSSTEAGGEV. A compositionally biased stretch (polar residues) spans 389 to 399; the sequence is HRSSTEAGGEV. A Glycyl lysine isopeptide (Lys-Gly) (interchain with G-Cter in SUMO2) cross-link involves residue Lys-403. The C2H2-type 1; degenerate zinc-finger motif lies at 406-428; that stretch reads YVCPNCGKIFRWRVNFIRHLRSR. 2 C2H2-type zinc fingers span residues 435 to 457 and 463 to 485; these read HECS…LESH and YRCG…RRIH. The tract at residues 488–513 is disordered; sequence PDRLQPVEKREQAASEDADKGPKEPL. Residue Lys-496 forms a Glycyl lysine isopeptide (Lys-Gly) (interchain with G-Cter in SUMO2) linkage. 2 consecutive C2H2-type zinc fingers follow at residues 522-545 and 553-575; these read FQCC…SHFH and FQCR…ERLH.

The protein belongs to the krueppel C2H2-type zinc-finger protein family. As to quaternary structure, interacts (via zinc-fingers) with JARID2. Interacts with NSD1.

The protein resides in the nucleus. Functionally, DNA-binding transcription factor that can both act as an activator and a repressor. The sequence is that of Zinc finger protein 496 (ZNF496) from Homo sapiens (Human).